The sequence spans 332 residues: MSTKEKLISHVMKEEPVGSRNKVTVVGVGMVGMASAISILLKDLCDELAMVDVMEDKLKGEVMDLQHGSLFLKTHKIVGDKDYSVTANSKLVVVTAGARQQEGESRLNLVQRNVNIFKFIIPNIVKYSPNCILMVVSNPVDILTYVAWKLSGFPRHRVLGSGTNLDSARFRHLIGEKLNLHPSSCHAWIIGEHGDSSVPVWSGLNVAGVSLQGLNPQMGTEGDSENWKAIHKEVVDGAYEVIKLKGYTSWAIGMSVADLVESILKNLHKVHPVSTLVQGMHGVKDEVFLSVPCVLGNSGLTDVVHMTLKAEEEKQVQNSAETLWGVQKELTL.

NAD(+) contacts are provided by residues 29–57 (GMVG…MEDK) and arginine 99. Substrate-binding residues include arginine 106, asparagine 138, and arginine 169. Asparagine 138 is a binding site for NAD(+). The active-site Proton acceptor is histidine 193. Threonine 248 serves as a coordination point for substrate.

This sequence belongs to the LDH/MDH superfamily. LDH family. As to quaternary structure, homotetramer.

The protein localises to the cytoplasm. It catalyses the reaction (S)-lactate + NAD(+) = pyruvate + NADH + H(+). The protein operates within fermentation; pyruvate fermentation to lactate; (S)-lactate from pyruvate: step 1/1. Its function is as follows. Interconverts simultaneously and stereospecifically pyruvate and lactate with concomitant interconversion of NADH and NAD(+). In Eleginops maclovinus (Patagonian blennie), this protein is L-lactate dehydrogenase A chain (ldha).